The sequence spans 450 residues: UDP-N-acetylmuramate--L-alanine ligase (450 aa).

Gly112–Thr118 lines the ATP pocket.

This sequence belongs to the MurCDEF family.

It is found in the cytoplasm. It catalyses the reaction UDP-N-acetyl-alpha-D-muramate + L-alanine + ATP = UDP-N-acetyl-alpha-D-muramoyl-L-alanine + ADP + phosphate + H(+). It participates in cell wall biogenesis; peptidoglycan biosynthesis. Its function is as follows. Cell wall formation. In Endomicrobium trichonymphae, this protein is UDP-N-acetylmuramate--L-alanine ligase.